Consider the following 200-residue polypeptide: Phycocyanobilin lyase subunit beta (200 aa).

The protein belongs to the CpcE/RpcE/PecE family. In terms of assembly, cpcE and CpcF associate to form a lyase.

In terms of biological role, required for the chromophorylation of the CpcA gene product. The chain is Phycocyanobilin lyase subunit beta (cpcF) from Nostoc sp. (strain PCC 7120 / SAG 25.82 / UTEX 2576).